We begin with the raw amino-acid sequence, 163 residues long: Photosystem II extrinsic protein V (163 aa).

Residues 1–26 form the signal peptide; the sequence is MFRRLIGVVVATVLLTFQLIVGSATA. C63, C66, H67, and H118 together coordinate heme c.

Belongs to the cytochrome c family. PsbV subfamily. PSII is composed of 1 copy each of membrane proteins PsbA, PsbB, PsbC, PsbD, PsbE, PsbF, PsbH, PsbI, PsbJ, PsbK, PsbL, PsbM, PsbT, PsbX, PsbY, PsbZ, Psb30/Ycf12, peripheral proteins PsbO, CyanoQ (PsbQ), PsbU, PsbV and a large number of cofactors. It forms dimeric complexes. Requires heme c as cofactor.

It localises to the cellular thylakoid membrane. Its function is as follows. One of the extrinsic, lumenal subunits of photosystem II (PSII). PSII is a light-driven water plastoquinone oxidoreductase, using light energy to abstract electrons from H(2)O, generating a proton gradient subsequently used for ATP formation. The extrinsic proteins stabilize the structure of photosystem II oxygen-evolving complex (OEC), the ion environment of oxygen evolution and protect the OEC against heat-induced inactivation. Low-potential cytochrome c that plays a role in the OEC of PSII. This chain is Photosystem II extrinsic protein V, found in Trichormus variabilis (strain ATCC 29413 / PCC 7937) (Anabaena variabilis).